Consider the following 599-residue polypeptide: Transcription factor COE4 (599 aa).

An interaction with DNA region spans residues 64–67 (RKSN). A C5-type zinc finger spans residues 152–171 (CRVLLTHEIMCSRCCDRKSC). Interaction with DNA regions lie at residues 198 to 205 (NCLKNAGN) and 237 to 240 (NNSK). The region spanning 256-339 (PCIKAISPGE…KGAPGRFVYT (84 aa)) is the IPT/TIG domain. Disordered stretches follow at residues 449–473 (GYAR…SSYG) and 556–586 (VLRP…TDKF). Residues 464–473 (SPGSQQSSYG) are compositionally biased toward low complexity.

It belongs to the COE family. Forms either a homodimer or a heterodimer with a related family member. Expressed in the olfactory epithelium, including in both neuronal and basal cell layers. Absent in the vomeronasal organ. Absent from NK cells and CD8(+) T cells.

The protein resides in the nucleus. Functionally, transcription factor. Positively modulates transcription, perhaps less strongly than other early B cell factor/EBF family proteins. Binds an EBF1/Olf-1 consensus site in vitro. The protein is Transcription factor COE4 (Ebf4) of Mus musculus (Mouse).